The sequence spans 106 residues: Nucleoid-associated protein Noc_2594 (106 aa).

Disordered stretches follow at residues 1–20 and 85–106; these read MKGGLGNLMKQAQQLQSNME and QSKEKMSSMTSGMLPPGFKLPL. Residues 10–20 show a composition bias toward polar residues; sequence KQAQQLQSNME.

It belongs to the YbaB/EbfC family. As to quaternary structure, homodimer.

It is found in the cytoplasm. The protein resides in the nucleoid. Its function is as follows. Binds to DNA and alters its conformation. May be involved in regulation of gene expression, nucleoid organization and DNA protection. The protein is Nucleoid-associated protein Noc_2594 of Nitrosococcus oceani (strain ATCC 19707 / BCRC 17464 / JCM 30415 / NCIMB 11848 / C-107).